The primary structure comprises 178 residues: RNA-binding protein (178 aa).

Positions 108 to 178 (SGFQKPKIGS…KGKGRRGGKR (71 aa)) are disordered. Over residues 168–178 (SKGKGRRGGKR) the composition is skewed to basic residues.

It belongs to the phytoreovirus RNA-binding protein family.

It localises to the host cytoplasm. Functionally, constituent of viral factories. Binds to ssRNA and dsRNA. The protein is RNA-binding protein of Wound tumor virus (strain NJ) (WTV).